We begin with the raw amino-acid sequence, 235 residues long: MNAIKFLTQNEAIVMDQLLMGKKYAFSTDSLMELAGLSCASVIQHVYPTISKKVLTICGPGNNGGDGLVASRHLVQFGYDVNIYYPKRTDKELYHNLVTQCKHEGIEFLESMPTNDQLNNDYGLVIDSIFGYSFKGDIRSPFDTIIKDSLNNIKTPIASIDMPSGWDVENGNIKNLFTPDLLISLAAPKLGSKSFKGKHYLGGRFLPKEFLKETNLTIPKFNGSNQFVDITNYQN.

The YjeF N-terminal domain maps to 12–218 (AIVMDQLLMG…EFLKETNLTI (207 aa)). 62–66 (NNGGD) contributes to the (6S)-NADPHX binding site. Residues asparagine 63 and aspartate 127 each coordinate K(+). (6S)-NADPHX-binding positions include 131-137 (GYSFKGD) and aspartate 161. Serine 164 provides a ligand contact to K(+).

The protein belongs to the NnrE/AIBP family. K(+) serves as cofactor.

It carries out the reaction (6R)-NADHX = (6S)-NADHX. It catalyses the reaction (6R)-NADPHX = (6S)-NADPHX. Its function is as follows. Catalyzes the epimerization of the S- and R-forms of NAD(P)HX, a damaged form of NAD(P)H that is a result of enzymatic or heat-dependent hydration. This is a prerequisite for the S-specific NAD(P)H-hydrate dehydratase to allow the repair of both epimers of NAD(P)HX. The chain is NAD(P)H-hydrate epimerase from Dictyostelium discoideum (Social amoeba).